A 1235-amino-acid chain; its full sequence is Serine/threonine-protein kinase TAO2 (1235 aa).

Serine 9 is subject to Phosphoserine. Positions 28–281 (FSDLREIGHG…SEVLLKHRFV (254 aa)) constitute a Protein kinase domain. ATP-binding positions include 34 to 42 (IGHGSFGAV) and lysine 57. Residue 106 to 108 (EYC) participates in staurosporine binding. Aspartate 151 acts as the Proton acceptor in catalysis. Glycine 155 is a staurosporine binding site. At serine 181 the chain carries Phosphoserine. Positions 318–457 (QEAPNGPGAE…PTSTSSSSAR (140 aa)) are disordered. Over residues 350–374 (SSHSVPSMSISASSQSSSVNSLADA) the composition is skewed to low complexity. A compositionally biased stretch (acidic residues) spans 375–395 (SDNEEEEEEEEEEEEEEEEEG). Residues 396–411 (PESREMAMMQEGEHTV) are compositionally biased toward basic and acidic residues. Serine 416 carries the phosphoserine modification. Coiled coils occupy residues 488–523 (SALR…EEHS) and 576–603 (KELA…LQEN). The residue at position 658 (serine 658) is a Phosphoserine. Residues 683 to 715 (LRQHEATRELELRQLQAVQRTRAELTRLQHQTE) adopt a coiled-coil conformation. Residues serine 777, serine 825, and serine 827 each carry the phosphoserine modification. A disordered region spans residues 892–941 (GPVLTPVPEEEEEEEEEGGAPIGTPRDPGDGCPSPDIPPEPPPSHLRQYP). Positions 899–909 (PEEEEEEEEEG) are enriched in acidic residues. A compositionally biased stretch (pro residues) spans 926-935 (PDIPPEPPPS). 3 helical membrane-spanning segments follow: residues 967 to 987 (LLPL…GGGL), 989 to 1009 (AALL…LFLC), and 1014 to 1034 (LPPS…VLSL). At arginine 1038 the chain carries Phosphoserine. 2 helical membrane-spanning segments follow: residues 1040-1060 (LMGV…SLAL) and 1170-1190 (LASC…LLKG). The disordered stretch occupies residues 1210–1235 (SASRQLPPGTVAGRRSQTRRALPPWR).

The protein belongs to the protein kinase superfamily. STE Ser/Thr protein kinase family. STE20 subfamily. Self-associates. Interacts with MAP2K3 and MAP2K6. Interacts with tubulins. Interacts with MAP3K7 and interferes with MAP3K7-binding to CHUK and thus prevents NF-kappa-B activation. Isoform 2 interacts with PCDH8; this complex may also include CDH2. Requires Mg(2+) as cofactor. Autophosphorylated. Phosphorylated by ATM. In terms of processing, phosphorylated on Ser-1038 by MAPK14. This phosphorylation is required PCDH8 for endocytosis.

It is found in the cytoplasmic vesicle membrane. The protein resides in the cytoplasm. The protein localises to the cytoskeleton. Its subcellular location is the cell projection. It localises to the dendrite. The enzyme catalyses L-seryl-[protein] + ATP = O-phospho-L-seryl-[protein] + ADP + H(+). It carries out the reaction L-threonyl-[protein] + ATP = O-phospho-L-threonyl-[protein] + ADP + H(+). Moderately inhibited by staurosporine, a broad-range protein kinase inhibitor. In terms of biological role, serine/threonine-protein kinase involved in different processes such as membrane blebbing and apoptotic bodies formation DNA damage response and MAPK14/p38 MAPK stress-activated MAPK cascade. Phosphorylates itself, MBP, activated MAPK8, MAP2K3, MAP2K6 and tubulins. Activates the MAPK14/p38 MAPK signaling pathway through the specific activation and phosphorylation of the upstream MAP2K3 and MAP2K6 kinases. In response to DNA damage, involved in the G2/M transition DNA damage checkpoint by activating the p38/MAPK14 stress-activated MAPK cascade, probably by mediating phosphorylation of upstream MAP2K3 and MAP2K6 kinases. May affect microtubule organization and stability. May play a role in the osmotic stress-MAPK8 pathway. Prevents MAP3K7-mediated activation of CHUK, and thus NF-kappa-B activation. Isoform 2, but not isoform 1, is required for PCDH8 endocytosis. Following homophilic interactions between PCDH8 extracellular domains, isoform 2 phosphorylates and activates MAPK14/p38 MAPK which in turn phosphorylates isoform 2. This process leads to PCDH8 endocytosis and CDH2 cointernalization. Both isoforms are involved in MAPK14/p38 MAPK activation. The protein is Serine/threonine-protein kinase TAO2 (Taok2) of Rattus norvegicus (Rat).